A 150-amino-acid chain; its full sequence is Ribosome-binding factor A (150 aa).

Residues 119–150 (VAERAKSAQPAGEPDPYRFDGAAAADDDEPAT) form a disordered region.

It belongs to the RbfA family. Monomer. Binds 30S ribosomal subunits, but not 50S ribosomal subunits or 70S ribosomes.

The protein localises to the cytoplasm. Its function is as follows. One of several proteins that assist in the late maturation steps of the functional core of the 30S ribosomal subunit. Associates with free 30S ribosomal subunits (but not with 30S subunits that are part of 70S ribosomes or polysomes). Required for efficient processing of 16S rRNA. May interact with the 5'-terminal helix region of 16S rRNA. The sequence is that of Ribosome-binding factor A from Acidothermus cellulolyticus (strain ATCC 43068 / DSM 8971 / 11B).